Consider the following 381-residue polypeptide: Periphilin-1 (381 aa).

Basic and acidic residues-rich tracts occupy residues 1-28, 39-65, and 79-121; these read MWSE…DGYH, PLLD…GYSR, and RSFS…DGFR. Disordered regions lie at residues 1 to 65 and 79 to 260; these read MWSE…GYSR and RSFS…KSDE. Residues 117–123 carry the Nuclear localization signal motif; that stretch reads RDGFRRK. Residue Lys123 forms a Glycyl lysine isopeptide (Lys-Gly) (interchain with G-Cter in SUMO2) linkage. 4 positions are modified to phosphoserine: Ser124, Ser128, Ser147, and Ser154. A compositionally biased stretch (basic and acidic residues) spans 130–156; it reads YSRDRSPHKRDAPFFRESPVGRKDSPH. A compositionally biased stretch (low complexity) spans 157 to 168; the sequence is SRSGSSVSSRSY. Residues 175-187 are compositionally biased toward basic residues; it reads THSFHQSQHRKSS. The residue at position 181 (Ser181) is a Phosphoserine. Residue Lys194 forms a Glycyl lysine isopeptide (Lys-Gly) (interchain with G-Cter in SUMO2) linkage. Residues 195–208 show a composition bias toward basic and acidic residues; sequence RQNEAIRGRGKERS. At Ser211 the chain carries Phosphoserine. A Glycyl lysine isopeptide (Lys-Gly) (interchain with G-Cter in SUMO2) cross-link involves residue Lys213. 2 positions are modified to phosphoserine: Ser215 and Ser219. Positions 217-230 are enriched in low complexity; sequence DASPSSSSAVASSK. The span at 231 to 260 shows a compositional bias: basic and acidic residues; the sequence is ALDKPSRLTEKELAEAESKWANETLEKSDE. A Glycyl lysine isopeptide (Lys-Gly) (interchain with G-Cter in SUMO2) cross-link involves residue Lys241. An N6-acetyllysine; alternate modification is found at Lys249. Lys249 participates in a covalent cross-link: Glycyl lysine isopeptide (Lys-Gly) (interchain with G-Cter in SUMO2); alternate. The residue at position 339 (Ser339) is a Phosphoserine. A Glycyl lysine isopeptide (Lys-Gly) (interchain with G-Cter in SUMO2) cross-link involves residue Lys342.

Homodimer. Component of the HUSH complex; at least composed of TASOR, PPHLN1 and MPHOSPH8. Interacts with SIN3A and HDAC1. May interact with PPL. Ubiquitously expressed. Strong expression in the developing somites and limbs, the embryonic nervous system and the adult brain.

The protein localises to the nucleus. The protein resides in the cytoplasm. Its subcellular location is the chromosome. Its function is as follows. Component of the HUSH complex, a multiprotein complex that mediates epigenetic repression. The HUSH complex is recruited to genomic loci rich in H3K9me3 and is probably required to maintain transcriptional silencing by promoting recruitment of SETDB1, a histone methyltransferase that mediates further deposition of H3K9me3. In the HUSH complex, contributes to the maintenance of the complex at chromatin. Acts as a transcriptional corepressor and regulates the cell cycle, probably via the HUSH complex. The HUSH complex is also involved in the silencing of unintegrated retroviral DNA: some part of the retroviral DNA formed immediately after infection remains unintegrated in the host genome and is transcriptionally repressed. May be involved in epithelial differentiation by contributing to epidermal integrity and barrier formation. The protein is Periphilin-1 of Mus musculus (Mouse).